A 67-amino-acid chain; its full sequence is Large ribosomal subunit protein bL35 (67 aa).

Belongs to the bacterial ribosomal protein bL35 family.

This Anaeromyxobacter sp. (strain Fw109-5) protein is Large ribosomal subunit protein bL35.